Here is a 433-residue protein sequence, read N- to C-terminus: Homogentisate 1,2-dioxygenase (433 aa).

The Proton acceptor role is filled by H288. Positions 331 and 337 each coordinate Fe cation. Positions 346 and 367 each coordinate homogentisate. Residue H367 coordinates Fe cation.

It belongs to the homogentisate dioxygenase family. Hexamer; dimer of trimers. Requires Fe cation as cofactor.

The enzyme catalyses homogentisate + O2 = 4-maleylacetoacetate + H(+). Its pathway is amino-acid degradation; L-phenylalanine degradation; acetoacetate and fumarate from L-phenylalanine: step 4/6. Functionally, involved in the catabolism of homogentisate (2,5-dihydroxyphenylacetate or 2,5-OH-PhAc), a central intermediate in the degradation of phenylalanine and tyrosine. Catalyzes the oxidative ring cleavage of the ar omatic ring of 2,5-dihydroxyphenylacetate to yield maleylacetoacetate. The chain is Homogentisate 1,2-dioxygenase from Pseudomonas putida (strain ATCC 47054 / DSM 6125 / CFBP 8728 / NCIMB 11950 / KT2440).